A 1371-amino-acid polypeptide reads, in one-letter code: uncharacterized protein (1371 aa).

Residues 1020-1048 (WYLSSSKNTPEPRPDPEPTPEGHDNNLRP) form a disordered region. Over residues 1029–1046 (PEPRPDPEPTPEGHDNNL) the composition is skewed to basic and acidic residues. Residues 1083–1371 (GEPKATSMWM…SAMLGVKYTF (289 aa)) enclose the Autotransporter domain.

The protein resides in the cell outer membrane. This is an uncharacterized protein from Escherichia coli (strain K12).